A 217-amino-acid polypeptide reads, in one-letter code: Homeobox protein Hox-B7 (217 aa).

The short motif at 126-131 is the Antp-type hexapeptide element; it reads IYPWMR. The segment at residues 137–196 is a DNA-binding region (homeobox); that stretch reads RKRGRQTYTRYQTLELEKEFHYNRYLTRRRRIEIAHTLCLTERQIKIWFQNRRMKWKKEN. Residues 192 to 217 are disordered; sequence WKKENKTSGPGTTGQDKAEAEEEEEE.

The protein belongs to the Antp homeobox family. As to quaternary structure, forms a DNA-binding heterodimer with transcription factor PBX1.

It is found in the nucleus. Its function is as follows. Sequence-specific transcription factor which is part of a developmental regulatory system that provides cells with specific positional identities on the anterior-posterior axis. This is Homeobox protein Hox-B7 (Hoxb7) from Mus musculus (Mouse).